The primary structure comprises 353 residues: MGCGMSTEEKEGKQRNEEIENQLKRDKLMQRNEIKMLLLGAGESGKSTILKQMKLIHEGGYSRDERESFKEIIFSNTVQSMRVILEAMESLELPLDDQRAEYHVQTIFMQPAQIEGDSLPPEVGNAISVLWKDAGVQQCFQRSREYQLNDSAKYYFDSIDRIAAPDYIPNDQDVLRSRVKTTGITETTFIIGDLTYRMFDVGGQRSERKKWIHCFENVTTILFLVAISEYDQLLFEDETVNRMQEALTLFDSICNSRWFVKTSIILFLNKIDRFKEKLPVSPMKNYFPDYEGGPDYAAACDYILNRFVSLNQHETKQIYTHFTCATDTMQIRFVMAAVNDIIIQENLRLCGLI.

Gly-2 carries N-myristoyl glycine lipidation. Cys-3 carries S-palmitoyl cysteine lipidation. The region spanning 32 to 353 is the G-alpha domain; it reads NEIKMLLLGA…QENLRLCGLI (322 aa). The G1 motif stretch occupies residues 35–48; it reads KMLLLGAGESGKST. Positions 43, 44, 45, 46, 47, 48, 150, 175, 181, 203, 269, 270, 272, and 325 each coordinate GTP. A Mg(2+)-binding site is contributed by Ser-47. Residues 173 to 181 form a G2 motif region; it reads DVLRSRVKT. Thr-181 provides a ligand contact to Mg(2+). Residues 196-205 are G3 motif; that stretch reads YRMFDVGGQR. Residues 265 to 272 form a G4 motif region; that stretch reads ILFLNKID. The segment at 323-328 is G5 motif; it reads TCATDT.

It belongs to the G-alpha family. G(q) subfamily. G proteins are composed of 3 units; alpha, beta and gamma. The alpha chain contains the guanine nucleotide binding site. Mg(2+) is required as a cofactor.

Functionally, guanine nucleotide-binding proteins (G proteins) are involved as modulators or transducers in various transmembrane signaling systems. Involved in the mating pathway. In Cochliobolus heterostrophus (strain C4 / ATCC 48331 / race T) (Southern corn leaf blight fungus), this protein is Guanine nucleotide-binding protein subunit alpha (CGA1).